The sequence spans 229 residues: Probable coenzyme A transferase subunit alpha (229 aa).

CoA is bound at residue 26-32; that stretch reads GGFGGVG.

The protein belongs to the 3-oxoacid CoA-transferase subunit A family. In terms of assembly, heterodimer of a subunit alpha and a subunit beta.

The polypeptide is Probable coenzyme A transferase subunit alpha (yodS) (Bacillus subtilis (strain 168)).